The chain runs to 309 residues: Methionyl-tRNA formyltransferase (309 aa).

(6S)-5,6,7,8-tetrahydrofolate is bound at residue 107 to 110 (SLLP).

The protein belongs to the Fmt family.

The enzyme catalyses L-methionyl-tRNA(fMet) + (6R)-10-formyltetrahydrofolate = N-formyl-L-methionyl-tRNA(fMet) + (6S)-5,6,7,8-tetrahydrofolate + H(+). Its function is as follows. Attaches a formyl group to the free amino group of methionyl-tRNA(fMet). The formyl group appears to play a dual role in the initiator identity of N-formylmethionyl-tRNA by promoting its recognition by IF2 and preventing the misappropriation of this tRNA by the elongation apparatus. The protein is Methionyl-tRNA formyltransferase of Borrelia duttonii (strain Ly).